The following is a 154-amino-acid chain: 6,7-dimethyl-8-ribityllumazine synthase (154 aa).

Residues F15, 47–49 (TFD), and 71–73 (AVI) contribute to the 5-amino-6-(D-ribitylamino)uracil site. 76 to 77 (ET) provides a ligand contact to (2S)-2-hydroxy-3-oxobutyl phosphate. The active-site Proton donor is H79. L104 serves as a coordination point for 5-amino-6-(D-ribitylamino)uracil. R119 contributes to the (2S)-2-hydroxy-3-oxobutyl phosphate binding site.

This sequence belongs to the DMRL synthase family.

It carries out the reaction (2S)-2-hydroxy-3-oxobutyl phosphate + 5-amino-6-(D-ribitylamino)uracil = 6,7-dimethyl-8-(1-D-ribityl)lumazine + phosphate + 2 H2O + H(+). The protein operates within cofactor biosynthesis; riboflavin biosynthesis; riboflavin from 2-hydroxy-3-oxobutyl phosphate and 5-amino-6-(D-ribitylamino)uracil: step 1/2. In terms of biological role, catalyzes the formation of 6,7-dimethyl-8-ribityllumazine by condensation of 5-amino-6-(D-ribitylamino)uracil with 3,4-dihydroxy-2-butanone 4-phosphate. This is the penultimate step in the biosynthesis of riboflavin. This chain is 6,7-dimethyl-8-ribityllumazine synthase, found in Saccharolobus islandicus (strain L.S.2.15 / Lassen #1) (Sulfolobus islandicus).